We begin with the raw amino-acid sequence, 373 residues long: Methionine import ATP-binding protein MetN 1 (373 aa).

The 242-residue stretch at Ile29 to Val270 folds into the ABC transporter domain. Gly67–Ser74 is an ATP binding site.

Belongs to the ABC transporter superfamily. Methionine importer (TC 3.A.1.24) family. The complex is composed of two ATP-binding proteins (MetN), two transmembrane proteins (MetI) and a solute-binding protein (MetQ).

It is found in the cell inner membrane. The catalysed reaction is L-methionine(out) + ATP + H2O = L-methionine(in) + ADP + phosphate + H(+). It carries out the reaction D-methionine(out) + ATP + H2O = D-methionine(in) + ADP + phosphate + H(+). In terms of biological role, part of the ABC transporter complex MetNIQ involved in methionine import. Responsible for energy coupling to the transport system. The chain is Methionine import ATP-binding protein MetN 1 from Rhodopseudomonas palustris (strain ATCC BAA-98 / CGA009).